Reading from the N-terminus, the 72-residue chain is Cell division protein ZapB (72 aa).

Residues 1 to 71 (MSLEILDQLE…LRSLLGRIDN (71 aa)) adopt a coiled-coil conformation. The interval 36-56 (LSRQTNEQLRSENEHLKTEHH) is disordered. The segment covering 44–56 (LRSENEHLKTEHH) has biased composition (basic and acidic residues).

Belongs to the ZapB family. In terms of assembly, homodimer. The ends of the coiled-coil dimer bind to each other, forming polymers. Interacts with FtsZ.

It is found in the cytoplasm. Its function is as follows. Non-essential, abundant cell division factor that is required for proper Z-ring formation. It is recruited early to the divisome by direct interaction with FtsZ, stimulating Z-ring assembly and thereby promoting cell division earlier in the cell cycle. Its recruitment to the Z-ring requires functional FtsA or ZipA. This chain is Cell division protein ZapB, found in Histophilus somni (strain 129Pt) (Haemophilus somnus).